The chain runs to 430 residues: Adenylosuccinate synthetase (430 aa).

GTP-binding positions include 13–19 and 41–43; these read GDEGKGK and GHT. Aspartate 14 functions as the Proton acceptor in the catalytic mechanism. Mg(2+) is bound by residues aspartate 14 and glycine 41. IMP contacts are provided by residues 14-17, 39-42, threonine 130, arginine 144, glutamine 225, threonine 240, and arginine 304; these read DEGK and NAGH. Residue histidine 42 is the Proton donor of the active site. A substrate-binding site is contributed by 300 to 306; that stretch reads STTGRAR. Residues arginine 306, 332–334, and 414–416 each bind GTP; these read KLD and STG.

Belongs to the adenylosuccinate synthetase family. In terms of assembly, homodimer. The cofactor is Mg(2+).

The protein resides in the cytoplasm. The catalysed reaction is IMP + L-aspartate + GTP = N(6)-(1,2-dicarboxyethyl)-AMP + GDP + phosphate + 2 H(+). It participates in purine metabolism; AMP biosynthesis via de novo pathway; AMP from IMP: step 1/2. Functionally, plays an important role in the de novo pathway of purine nucleotide biosynthesis. Catalyzes the first committed step in the biosynthesis of AMP from IMP. The polypeptide is Adenylosuccinate synthetase (Alcanivorax borkumensis (strain ATCC 700651 / DSM 11573 / NCIMB 13689 / SK2)).